Consider the following 258-residue polypeptide: Isoprenyl transferase 2 (258 aa).

Residue D35 is part of the active site. D35 serves as a coordination point for Mg(2+). Substrate-binding positions include 36-39 (GNRR), W40, R50, and 81-83 (SDD). N84 serves as the catalytic Proton acceptor. Substrate is bound by residues R87, R207, and 213–215 (RLS). E226 contributes to the Mg(2+) binding site.

This sequence belongs to the UPP synthase family. As to quaternary structure, homodimer. Mg(2+) is required as a cofactor.

Functionally, catalyzes the condensation of isopentenyl diphosphate (IPP) with allylic pyrophosphates generating different type of terpenoids. This chain is Isoprenyl transferase 2, found in Streptomyces coelicolor (strain ATCC BAA-471 / A3(2) / M145).